Consider the following 308-residue polypeptide: Urease subunit beta (308 aa).

The Urease domain occupies Gly131–Lys308. Residues His136, His138, Lys219, His248, and His274 each coordinate Ni(2+). An N6-carboxylysine modification is found at Lys219.

This sequence belongs to the metallo-dependent hydrolases superfamily. Urease alpha subunit family. In terms of assembly, heterohexamer of 3 UreA (alpha) and 3 UreB (beta) subunits. Ni cation is required as a cofactor. Post-translationally, carboxylation allows a single lysine to coordinate two nickel ions.

Its subcellular location is the cytoplasm. It catalyses the reaction urea + 2 H2O + H(+) = hydrogencarbonate + 2 NH4(+). The protein operates within nitrogen metabolism; urea degradation; CO(2) and NH(3) from urea (urease route): step 1/1. This is Urease subunit beta (ureB) from Helicobacter mustelae.